Reading from the N-terminus, the 537-residue chain is Pentatricopeptide repeat-containing protein At4g32450, mitochondrial (537 aa).

The N-terminal 110 residues, 1–110 (MIYTLTRGSL…EHSEIINQRN (110 aa)), are a transit peptide targeting the mitochondrion. Residues 113-140 (WQSSDGCSSYGTTGNGVPQENNTGGNHF) show a composition bias toward polar residues. The disordered stretch occupies residues 113-148 (WQSSDGCSSYGTTGNGVPQENNTGGNHFQQDHSGHS). 6 PPR repeats span residues 145–179 (SGHS…GYVV), 180–210 (DLPR…ITSS), 215–249 (DISA…NLET), 250–280 (WCGV…GNKP), 281–316 (DGEM…GIIP), and 317–347 (CMEH…MEPN). The tract at residues 412–442 (YGIRYMAAGDISRPENRELYMALKSLKEHMI) is type E(+) motif. A type DYW motif region spans residues 443 to 537 (EIGYVPLSKL…DGVCSCREYW (95 aa)).

The protein belongs to the PPR family. PCMP-H subfamily.

The protein localises to the mitochondrion. The chain is Pentatricopeptide repeat-containing protein At4g32450, mitochondrial (PCMP-H63) from Arabidopsis thaliana (Mouse-ear cress).